A 532-amino-acid polypeptide reads, in one-letter code: Putative sodium-dependent excitatory amino acid transporter glt-3 (532 aa).

Residues 1–5 lie on the Cytoplasmic side of the membrane; the sequence is MGMKK. The next 3 membrane-spanning stretches (helical) occupy residues 6-26, 46-66, and 83-103; these read DLLL…GFVI, FMQI…ISAL, and IYYM…VSSI. The Extracellular segment spans residues 104-181; sequence HPGDPELIHE…SEVLHKQTLT (78 aa). Residues Asn-164 and Asn-169 are each glycosylated (N-linked (GlcNAc...) asparagine). Transmembrane regions (helical) follow at residues 182-202, 222-242, 264-284, 352-372, and 383-402; these read YTNE…GIIL, IIMR…LSLV, VTVI…LYFL, AVAV…MDLV, and IGSG…LTTV.

It belongs to the dicarboxylate/amino acid:cation symporter (DAACS) (TC 2.A.23) family.

It localises to the membrane. This is Putative sodium-dependent excitatory amino acid transporter glt-3 (glt-3) from Caenorhabditis elegans.